The chain runs to 384 residues: Intraflagellar transport protein 46 homolog (384 aa).

2 disordered regions span residues 52–151 and 358–384; these read VNAE…PADY and SATD…LTLD. Residues 87–99 show a composition bias toward basic and acidic residues; sequence EKLEEDTKRKKEP. Residues 110–138 are compositionally biased toward acidic residues; that stretch reads DEEEDEDDDDDDDDDDSDDTESDEEEEEP. Polar residues predominate over residues 358 to 374; the sequence is SATDGQKSDTPPASRSA.

The protein belongs to the IFT46 family.

The protein resides in the cytoplasm. It localises to the cytoskeleton. It is found in the cilium basal body. Its subcellular location is the cell projection. The protein localises to the cilium. In terms of biological role, forms part of a complex involved in intraflagellar transport (IFT), the bi-directional movement of particles required for the assembly, maintenance and functioning of primary cilia. Plays a role in early embryonic development. This is Intraflagellar transport protein 46 homolog from Danio rerio (Zebrafish).